The chain runs to 368 residues: p21-activated protein kinase-interacting protein 1-like (368 aa).

5 WD repeats span residues 45–82, 85–123, 126–165, 207–245, and 248–289; these read AHTA…EHGA, HHDG…CLKT, AHKG…SAFI, AFTK…CVCE, and AHEN…IESP.

The protein resides in the nucleus. It is found in the nucleolus. Its function is as follows. Negatively regulates the PAK1 kinase. PAK1 is a member of the PAK kinase family, which has been shown to play a positive role in the regulation of signaling pathways involving MAPK8 and RELA. PAK1 exists as an inactive homodimer, which is activated by binding of small GTPases such as CDC42 to an N-terminal regulatory domain. PAK1IP1 also binds to the N-terminus of PAK1, and inhibits the specific activation of PAK1 by CDC42. May be involved in ribosomal large subunit assembly. This is p21-activated protein kinase-interacting protein 1-like (pak1ip1) from Danio rerio (Zebrafish).